The chain runs to 72 residues: Mitotic-spindle organizing protein 1 (72 aa).

The protein belongs to the MOZART1 family. Part of the gamma-tubulin complex.

The protein localises to the cytoplasm. The protein resides in the cytoskeleton. It is found in the microtubule organizing center. It localises to the spindle pole body. Required for gamma-tubulin complex recruitment to the microtubule organizing center (MTOC). This Cryptococcus neoformans var. neoformans serotype D (strain B-3501A) (Filobasidiella neoformans) protein is Mitotic-spindle organizing protein 1.